The primary structure comprises 385 residues: Methionine aminopeptidase 1 (385 aa).

The C6H2-type zinc-finger motif lies at 6-59; the sequence is SRVCETEGCSSEAKLQCPTCIKLGIQGSYFCSQECFKGSWASHKLLHKKAKDDK. Residues Cys9, Cys14, Cys22, Cys25, Cys36, Cys40, His48, and His52 each contribute to the Zn(2+) site. Residue His203 coordinates a protein. Asp220, Asp231, and His294 together coordinate Zn(2+). A protein is bound at residue His301. Glu327 and Glu358 together coordinate Zn(2+).

Belongs to the peptidase M24A family. Methionine aminopeptidase type 1 subfamily. In terms of assembly, associates with the 60S ribosomal subunit of the 80S translational complex. Zn(2+) is required as a cofactor. Co(2+) serves as cofactor. Requires Mn(2+) as cofactor. The cofactor is Fe(2+).

It localises to the cytoplasm. The enzyme catalyses Release of N-terminal amino acids, preferentially methionine, from peptides and arylamides.. In terms of biological role, cotranslationally removes the N-terminal methionine from nascent proteins. The N-terminal methionine is often cleaved when the second residue in the primary sequence is small and uncharged (Met-Ala-, Cys, Gly, Pro, Ser, Thr, or Val). The sequence is that of Methionine aminopeptidase 1 (metap1) from Xenopus tropicalis (Western clawed frog).